The sequence spans 416 residues: Enolase (416 aa).

Gln-160 contacts (2R)-2-phosphoglycerate. The active-site Proton donor is the Glu-204. Mg(2+)-binding residues include Asp-239, Glu-282, and Asp-308. The (2R)-2-phosphoglycerate site is built by Lys-333, Arg-362, Ser-363, and Lys-384. Residue Lys-333 is the Proton acceptor of the active site.

It belongs to the enolase family. Mg(2+) is required as a cofactor.

It localises to the cytoplasm. Its subcellular location is the secreted. The protein localises to the cell surface. The catalysed reaction is (2R)-2-phosphoglycerate = phosphoenolpyruvate + H2O. Its pathway is carbohydrate degradation; glycolysis; pyruvate from D-glyceraldehyde 3-phosphate: step 4/5. In terms of biological role, catalyzes the reversible conversion of 2-phosphoglycerate (2-PG) into phosphoenolpyruvate (PEP). It is essential for the degradation of carbohydrates via glycolysis. The sequence is that of Enolase from Metallosphaera sedula (strain ATCC 51363 / DSM 5348 / JCM 9185 / NBRC 15509 / TH2).